Here is a 353-residue protein sequence, read N- to C-terminus: Ribosome biogenesis protein BRX1 homolog (353 aa).

The segment at 1-50 (MAATKRKRRGGLEVQAKKPKRSSKDAGQPAKQADVAKEAEEENRDRIPGP) is disordered. Over residues 34–47 (DVAKEAEEENRDRI) the composition is skewed to basic and acidic residues. Residues 60-249 (ERILIFSSRG…LIKIFQGSFG (190 aa)) form the Brix domain. Lys160 is covalently cross-linked (Glycyl lysine isopeptide (Lys-Gly) (interchain with G-Cter in SUMO2)). Residue Ser261 is modified to Phosphoserine. Lys276 bears the N6-acetyllysine mark. Glycyl lysine isopeptide (Lys-Gly) (interchain with G-Cter in SUMO2) cross-links involve residues Lys314 and Lys322. Over residues 334-344 (RRIYKRHRKLQ) the composition is skewed to basic residues. The tract at residues 334–353 (RRIYKRHRKLQQKMSRGSAK) is disordered.

The protein belongs to the BRX1 family.

The protein localises to the nucleus. It localises to the nucleolus. In terms of biological role, required for biogenesis of the 60S ribosomal subunit. The protein is Ribosome biogenesis protein BRX1 homolog (Brix1) of Mus musculus (Mouse).